A 277-amino-acid chain; its full sequence is Small ribosomal subunit protein mS23 (277 aa).

2 disordered regions span residues 48 to 85 and 232 to 277; these read APSHPVVKQRMRTVPGKSKPQLEIKSSAGRKQTSKKPS and LAAF…GPPI. Over residues 244–269 the composition is skewed to acidic residues; that stretch reads ESGESEDEIPLIEEEDAIGASEESET.

The protein belongs to the mitochondrion-specific ribosomal protein mS23 family. As to quaternary structure, component of the mitochondrial small ribosomal subunit.

It is found in the mitochondrion. This chain is Small ribosomal subunit protein mS23 (RSM25), found in Ajellomyces capsulatus (strain NAm1 / WU24) (Darling's disease fungus).